The sequence spans 638 residues: Methylmalonyl-CoA mutase small subunit (638 aa).

Over residues 1–11 (MSSTDQGTNPA) the composition is skewed to polar residues. Positions 1–34 (MSSTDQGTNPADTDDLTPTTLSLAGDFPKATEEQ) are disordered.

The protein belongs to the methylmalonyl-CoA mutase family. In terms of assembly, heterodimer of an alpha and a beta chain. Adenosylcob(III)alamin is required as a cofactor.

The enzyme catalyses (R)-methylmalonyl-CoA = succinyl-CoA. It functions in the pathway metabolic intermediate metabolism; propanoyl-CoA degradation; succinyl-CoA from propanoyl-CoA: step 3/3. Catalyzes the isomerization of succinyl-CoA to methylmalonyl-CoA during synthesis of propionate from tricarboxylic acid-cycle intermediates. This Propionibacterium freudenreichii subsp. shermanii protein is Methylmalonyl-CoA mutase small subunit (mutA).